A 272-amino-acid chain; its full sequence is NH(3)-dependent NAD(+) synthetase (272 aa).

45–52 (GISGGQDS) contributes to the ATP binding site. D51 contributes to the Mg(2+) binding site. R138 provides a ligand contact to deamido-NAD(+). T158 contacts ATP. E163 is a binding site for Mg(2+). K171 and D178 together coordinate deamido-NAD(+). ATP is bound by residues K187 and T209. 258–259 (HK) is a binding site for deamido-NAD(+).

It belongs to the NAD synthetase family. In terms of assembly, homodimer.

It carries out the reaction deamido-NAD(+) + NH4(+) + ATP = AMP + diphosphate + NAD(+) + H(+). The protein operates within cofactor biosynthesis; NAD(+) biosynthesis; NAD(+) from deamido-NAD(+) (ammonia route): step 1/1. In terms of biological role, catalyzes the ATP-dependent amidation of deamido-NAD to form NAD. Uses ammonia as a nitrogen source. In Bacillus cereus (strain 03BB102), this protein is NH(3)-dependent NAD(+) synthetase.